Here is a 1012-residue protein sequence, read N- to C-terminus: Vacuolar protein-sorting protein bro-1 (1012 aa).

A BRO1 domain is found at proline 5 to methionine 407. Residues isoleucine 301–glutamine 330 are a coiled coil. The segment at arginine 558–alanine 578 is disordered. The stretch at leucine 719–glutamate 775 forms a coiled coil. Disordered stretches follow at residues methionine 784–proline 812 and asparagine 827–lysine 1012. A compositionally biased stretch (polar residues) spans asparagine 827 to proline 842. Over residues asparagine 844 to asparagine 857 the composition is skewed to low complexity. The segment covering glutamine 892–asparagine 913 has biased composition (polar residues). Over residues proline 914–proline 930 the composition is skewed to low complexity. Residues glycine 931–glycine 945 show a composition bias toward pro residues. Residues proline 970–glycine 985 are compositionally biased toward gly residues.

Belongs to the BRO1 family.

The protein resides in the cytoplasm. It is found in the endosome. In terms of biological role, involved in concentration and sorting of cargo proteins of the multivesicular body (MVB) for incorporation into intralumenal vesicles. The sequence is that of Vacuolar protein-sorting protein bro-1 (bro-1) from Neurospora crassa (strain ATCC 24698 / 74-OR23-1A / CBS 708.71 / DSM 1257 / FGSC 987).